The chain runs to 480 residues: ATP synthase subunit beta 1 (480 aa).

154–161 lines the ATP pocket; that stretch reads GGAGVGKT.

The protein belongs to the ATPase alpha/beta chains family. As to quaternary structure, F-type ATPases have 2 components, CF(1) - the catalytic core - and CF(0) - the membrane proton channel. CF(1) has five subunits: alpha(3), beta(3), gamma(1), delta(1), epsilon(1). CF(0) has four main subunits: a(1), b(1), b'(1) and c(9-12).

It is found in the cell inner membrane. It carries out the reaction ATP + H2O + 4 H(+)(in) = ADP + phosphate + 5 H(+)(out). Produces ATP from ADP in the presence of a proton gradient across the membrane. The catalytic sites are hosted primarily by the beta subunits. This chain is ATP synthase subunit beta 1, found in Bradyrhizobium sp. (strain BTAi1 / ATCC BAA-1182).